The sequence spans 541 residues: Chaperonin GroEL (541 aa).

ATP-binding positions include threonine 29–proline 32, aspartate 86–threonine 90, glycine 413, asparagine 476–alanine 478, and aspartate 492. Residues lysine 521–methionine 541 are disordered. A compositionally biased stretch (low complexity) spans asparagine 525–proline 535.

The protein belongs to the chaperonin (HSP60) family. Forms a cylinder of 14 subunits composed of two heptameric rings stacked back-to-back. Interacts with the co-chaperonin GroES.

It localises to the cytoplasm. It catalyses the reaction ATP + H2O + a folded polypeptide = ADP + phosphate + an unfolded polypeptide.. Together with its co-chaperonin GroES, plays an essential role in assisting protein folding. The GroEL-GroES system forms a nano-cage that allows encapsulation of the non-native substrate proteins and provides a physical environment optimized to promote and accelerate protein folding. The polypeptide is Chaperonin GroEL (Lactiplantibacillus plantarum (strain ATCC BAA-793 / NCIMB 8826 / WCFS1) (Lactobacillus plantarum)).